The primary structure comprises 526 residues: Phosphoenolpyruvate carboxylase (526 aa).

Belongs to the PEPCase type 2 family. As to quaternary structure, homotetramer. Mg(2+) is required as a cofactor.

It carries out the reaction oxaloacetate + phosphate = phosphoenolpyruvate + hydrogencarbonate. Catalyzes the irreversible beta-carboxylation of phosphoenolpyruvate (PEP) to form oxaloacetate (OAA), a four-carbon dicarboxylic acid source for the tricarboxylic acid cycle. The polypeptide is Phosphoenolpyruvate carboxylase (Methanosarcina mazei (strain ATCC BAA-159 / DSM 3647 / Goe1 / Go1 / JCM 11833 / OCM 88) (Methanosarcina frisia)).